The primary structure comprises 343 residues: Cilia- and flagella-associated protein 36 (343 aa).

Residues Ser-85 and Ser-147 each carry the phosphoserine modification. A coiled-coil region spans residues Ser-147–Glu-187. The tract at residues Lys-165–Leu-188 is disordered. Ser-201 is subject to Phosphoserine. 2 stretches are compositionally biased toward basic and acidic residues: residues Gln-279–Thr-293 and Gln-301–Lys-323. Residues Gln-279–Lys-323 are disordered.

Belongs to the CFAP36 family. Interacts with ARL3.

It localises to the nucleus. It is found in the cytoplasm. The protein localises to the cell projection. Its subcellular location is the cilium. The protein resides in the flagellum. May act as an effector for ARL3. The protein is Cilia- and flagella-associated protein 36 of Mus musculus (Mouse).